The chain runs to 210 residues: Cell division protein FtsQ (210 aa).

In terms of domain architecture, POTRA spans 1–58 (LQTSEIEVFQLLGLDGSTSLIALDIDAARRKLVQLPWVEDVDIRKVYPKTVEVRLKER). A helical transmembrane segment spans residues 8–25 (VFQLLGLDGSTSLIALDI).

It belongs to the FtsQ/DivIB family. FtsQ subfamily.

The protein localises to the cell inner membrane. Essential cell division protein. This is Cell division protein FtsQ from Rhizobium radiobacter (Agrobacterium tumefaciens).